The sequence spans 442 residues: 3-ketoacyl-CoA thiolase (442 aa).

The active-site Acyl-thioester intermediate is Cys-105. Catalysis depends on proton acceptor residues His-398 and Cys-428.

This sequence belongs to the thiolase-like superfamily. Thiolase family. In terms of assembly, heterotetramer of two alpha chains (FadJ) and two beta chains (FadI).

The protein resides in the cytoplasm. The catalysed reaction is an acyl-CoA + acetyl-CoA = a 3-oxoacyl-CoA + CoA. The protein operates within lipid metabolism; fatty acid beta-oxidation. In terms of biological role, catalyzes the final step of fatty acid oxidation in which acetyl-CoA is released and the CoA ester of a fatty acid two carbons shorter is formed. This chain is 3-ketoacyl-CoA thiolase, found in Aliivibrio fischeri (strain MJ11) (Vibrio fischeri).